Reading from the N-terminus, the 1106-residue chain is Protein translocase subunit SecA (1106 aa).

Residues Q175, 193 to 197 (GEGKT), and D694 contribute to the ATP site. Residues 1021–1106 (QEAPADEQQP…KYKNCHGQNA (86 aa)) form a disordered region. A compositionally biased stretch (basic and acidic residues) spans 1042–1056 (QRQDMSKYREQKQDL). Residues 1057–1067 (SDPNQQAAASQ) show a composition bias toward polar residues. The span at 1068–1085 (DTREQQKREPIRAEKTVG) shows a compositional bias: basic and acidic residues. Residues C1090, C1092, C1101, and H1102 each contribute to the Zn(2+) site.

The protein belongs to the SecA family. Monomer and homodimer. Part of the essential Sec protein translocation apparatus which comprises SecA, SecYEG and auxiliary proteins SecDF. Other proteins may also be involved. The cofactor is Zn(2+).

The protein resides in the cell inner membrane. Its subcellular location is the cytoplasm. It catalyses the reaction ATP + H2O + cellular proteinSide 1 = ADP + phosphate + cellular proteinSide 2.. Its function is as follows. Part of the Sec protein translocase complex. Interacts with the SecYEG preprotein conducting channel. Has a central role in coupling the hydrolysis of ATP to the transfer of proteins into and across the cell membrane, serving as an ATP-driven molecular motor driving the stepwise translocation of polypeptide chains across the membrane. The protein is Protein translocase subunit SecA of Bacteroides thetaiotaomicron (strain ATCC 29148 / DSM 2079 / JCM 5827 / CCUG 10774 / NCTC 10582 / VPI-5482 / E50).